The sequence spans 286 residues: Bifunctional protein FolD (286 aa).

Residues 165-167 (GRS) and S190 each bind NADP(+).

This sequence belongs to the tetrahydrofolate dehydrogenase/cyclohydrolase family. In terms of assembly, homodimer.

It carries out the reaction (6R)-5,10-methylene-5,6,7,8-tetrahydrofolate + NADP(+) = (6R)-5,10-methenyltetrahydrofolate + NADPH. The enzyme catalyses (6R)-5,10-methenyltetrahydrofolate + H2O = (6R)-10-formyltetrahydrofolate + H(+). Its pathway is one-carbon metabolism; tetrahydrofolate interconversion. In terms of biological role, catalyzes the oxidation of 5,10-methylenetetrahydrofolate to 5,10-methenyltetrahydrofolate and then the hydrolysis of 5,10-methenyltetrahydrofolate to 10-formyltetrahydrofolate. The protein is Bifunctional protein FolD of Staphylococcus aureus (strain bovine RF122 / ET3-1).